Consider the following 346-residue polypeptide: tRNA N6-adenosine threonylcarbamoyltransferase (346 aa).

Fe cation-binding residues include His-111 and His-115. Substrate contacts are provided by residues 134-138, Asp-167, Gly-180, and Asn-279; that span reads LVSGG. A Fe cation-binding site is contributed by Asp-307.

It belongs to the KAE1 / TsaD family. Fe(2+) serves as cofactor.

The protein localises to the cytoplasm. The enzyme catalyses L-threonylcarbamoyladenylate + adenosine(37) in tRNA = N(6)-L-threonylcarbamoyladenosine(37) in tRNA + AMP + H(+). Functionally, required for the formation of a threonylcarbamoyl group on adenosine at position 37 (t(6)A37) in tRNAs that read codons beginning with adenine. Is involved in the transfer of the threonylcarbamoyl moiety of threonylcarbamoyl-AMP (TC-AMP) to the N6 group of A37, together with TsaE and TsaB. TsaD likely plays a direct catalytic role in this reaction. This Burkholderia ambifaria (strain ATCC BAA-244 / DSM 16087 / CCUG 44356 / LMG 19182 / AMMD) (Burkholderia cepacia (strain AMMD)) protein is tRNA N6-adenosine threonylcarbamoyltransferase.